The chain runs to 670 residues: UvrABC system protein B (670 aa).

The Helicase ATP-binding domain maps to Glu-26 to Arg-183. Residue Gly-39–Thr-46 coordinates ATP. The Beta-hairpin signature appears at Tyr-92–Val-115. In terms of domain architecture, Helicase C-terminal spans Gln-431–Leu-597. Residues Glu-630–Gln-665 form the UVR domain.

This sequence belongs to the UvrB family. In terms of assembly, forms a heterotetramer with UvrA during the search for lesions. Interacts with UvrC in an incision complex.

It localises to the cytoplasm. Functionally, the UvrABC repair system catalyzes the recognition and processing of DNA lesions. A damage recognition complex composed of 2 UvrA and 2 UvrB subunits scans DNA for abnormalities. Upon binding of the UvrA(2)B(2) complex to a putative damaged site, the DNA wraps around one UvrB monomer. DNA wrap is dependent on ATP binding by UvrB and probably causes local melting of the DNA helix, facilitating insertion of UvrB beta-hairpin between the DNA strands. Then UvrB probes one DNA strand for the presence of a lesion. If a lesion is found the UvrA subunits dissociate and the UvrB-DNA preincision complex is formed. This complex is subsequently bound by UvrC and the second UvrB is released. If no lesion is found, the DNA wraps around the other UvrB subunit that will check the other stand for damage. The polypeptide is UvrABC system protein B (Pectobacterium carotovorum subsp. carotovorum (strain PC1)).